The chain runs to 247 residues: tRNA (guanine-N(7)-)-methyltransferase (247 aa).

Residues Gly-70, 93-94 (EI), 128-129 (NA), and Leu-148 contribute to the S-adenosyl-L-methionine site. The active site involves Asp-151. 226–228 (SEE) contacts S-adenosyl-L-methionine.

The protein belongs to the class I-like SAM-binding methyltransferase superfamily. TrmB family.

Its subcellular location is the nucleus. The enzyme catalyses guanosine(46) in tRNA + S-adenosyl-L-methionine = N(7)-methylguanosine(46) in tRNA + S-adenosyl-L-homocysteine. Its pathway is tRNA modification; N(7)-methylguanine-tRNA biosynthesis. Catalyzes the formation of N(7)-methylguanine at position 46 (m7G46) in tRNA. The chain is tRNA (guanine-N(7)-)-methyltransferase from Drosophila pseudoobscura pseudoobscura (Fruit fly).